Here is a 439-residue protein sequence, read N- to C-terminus: Proton pump-interactor 4 (439 aa).

Positions 286–354 (KEEKEIDEET…AKKKKAVCKS (69 aa)) form a coiled coil. The helical transmembrane segment at 415–435 (LWVWTVSSAAVALPLALLVVF) threads the bilayer.

This sequence belongs to the plant Proton pump-interactor protein family.

The protein localises to the cell membrane. The protein resides in the endoplasmic reticulum membrane. Its function is as follows. May regulate plasma membrane ATPase activity. In Arabidopsis thaliana (Mouse-ear cress), this protein is Proton pump-interactor 4 (PPI4).